The chain runs to 348 residues: Isopentenyl-diphosphate delta-isomerase (348 aa).

14–15 (RK) contributes to the substrate binding site. Residues serine 72, 73–75 (SMT), serine 103, and asparagine 131 contribute to the FMN site. Residue 103-105 (SQR) coordinates substrate. Glutamine 166 contributes to the substrate binding site. Glutamate 167 is a Mg(2+) binding site. Residues lysine 198, threonine 228, 278 to 280 (GIR), and 299 to 300 (AR) each bind FMN.

It belongs to the IPP isomerase type 2 family. Homooctamer. Dimer of tetramers. FMN is required as a cofactor. It depends on NADPH as a cofactor. Mg(2+) serves as cofactor.

Its subcellular location is the cytoplasm. It catalyses the reaction isopentenyl diphosphate = dimethylallyl diphosphate. Involved in the biosynthesis of isoprenoids. Catalyzes the 1,3-allylic rearrangement of the homoallylic substrate isopentenyl (IPP) to its allylic isomer, dimethylallyl diphosphate (DMAPP). The sequence is that of Isopentenyl-diphosphate delta-isomerase from Synechococcus sp. (strain ATCC 27144 / PCC 6301 / SAUG 1402/1) (Anacystis nidulans).